A 215-amino-acid chain; its full sequence is ATP-dependent Clp protease proteolytic subunit 1 (215 aa).

Catalysis depends on S111, which acts as the Nucleophile. Residue H136 is part of the active site.

This sequence belongs to the peptidase S14 family. As to quaternary structure, fourteen ClpP subunits assemble into 2 heptameric rings which stack back to back to give a disk-like structure with a central cavity, resembling the structure of eukaryotic proteasomes.

The protein resides in the cytoplasm. The enzyme catalyses Hydrolysis of proteins to small peptides in the presence of ATP and magnesium. alpha-casein is the usual test substrate. In the absence of ATP, only oligopeptides shorter than five residues are hydrolyzed (such as succinyl-Leu-Tyr-|-NHMec, and Leu-Tyr-Leu-|-Tyr-Trp, in which cleavage of the -Tyr-|-Leu- and -Tyr-|-Trp bonds also occurs).. Functionally, cleaves peptides in various proteins in a process that requires ATP hydrolysis. Has a chymotrypsin-like activity. Plays a major role in the degradation of misfolded proteins. The protein is ATP-dependent Clp protease proteolytic subunit 1 of Gluconobacter oxydans (strain 621H) (Gluconobacter suboxydans).